Here is a 478-residue protein sequence, read N- to C-terminus: MTRIKINARRIFSLLIPFFFFTSVHAEQTAAPAKTVTVEAKNETFAPQHPDQYLSWKATSEQSERVDALAEDPRLVILWAGYPFSRDYNKPRGHAFAVTDVRETLRTGAPKNAEDGPLPMACWSCKSPDVARLIQKDGEDGYFHGKWARGGPEIVNNLGCADCHNTASPEFAKGKPELTLSRPYAARAMEAIGKPFEKAGRFDQQSMVCGQCHVEYYFDGKNKAVKFPWDDGMKVENMEQYYDKIAFSDWTNSLSKTPMLKAQHPEYETWTAGIHGKNNVTCIDCHMPKVQNAEGKLYTDHKIGNPFDNFAQTCANCHTQDKAALQKVVAERKQSINDLKIKVEDQLVHAHFEAKAALDAGATEAEMKPIQDDIRHAQWRWDLAIASHGIHMHAPEEGLRMLGTAMDKAADARTKLARLLATKGITHEIEIPDISTKEKAQQAIGLNMEQIKAEKQDFIKTVIPQWEEQARKNGLLSQ.

A signal peptide spans 1-26 (MTRIKINARRIFSLLIPFFFFTSVHA). Residue H94 participates in heme c binding. 3 residues coordinate heme: C122, C125, and K126. 6 residues coordinate heme c: C160, C163, H164, C209, C212, and H213. Ca(2+)-binding residues include E215, Y216, K261, and Q263. Position 216 (Y216) interacts with substrate. Substrate is bound at residue H264. Residues H275, C282, C285, H286, H301, C314, C317, H318, and H393 each coordinate heme c.

The protein belongs to the cytochrome c-552 family. The cofactor is Ca(2+). It depends on heme c as a cofactor.

It is found in the periplasm. It carries out the reaction 6 Fe(III)-[cytochrome c] + NH4(+) + 2 H2O = 6 Fe(II)-[cytochrome c] + nitrite + 8 H(+). It functions in the pathway nitrogen metabolism; nitrate reduction (assimilation). Its function is as follows. Catalyzes the reduction of nitrite to ammonia, consuming six electrons in the process. In Escherichia coli O9:H4 (strain HS), this protein is Cytochrome c-552.